Consider the following 134-residue polypeptide: Z-ring associated protein G (134 aa).

The helical transmembrane segment at E7–V27 threads the bilayer. Positions A107–N134 are disordered. Over residues S111–S120 the composition is skewed to basic and acidic residues.

It belongs to the ZapG family.

The protein resides in the cell inner membrane. Functionally, involved in cell division, cell envelope biogenesis and cell shape maintenance. In Haemophilus influenzae (strain ATCC 51907 / DSM 11121 / KW20 / Rd), this protein is Z-ring associated protein G.